A 382-amino-acid polypeptide reads, in one-letter code: Proton extrusion protein PxcA (382 aa).

A run of 4 helical transmembrane segments spans residues 156–176 (TLIS…VQQV), 257–277 (AVKN…VCVF), 305–325 (IILF…TVLL), and 340–360 (FILL…KYWI).

This sequence belongs to the CemA family.

It localises to the cell inner membrane. Required for H(+) efflux immediately after light irradiation to form a rapid H(+) concentration gradient across the thylakoid membranes. Together with PxcL, contributes to transient H(+) uptake following dark to light transition. The protein is Proton extrusion protein PxcA of Synechococcus sp. (strain WH7803).